The chain runs to 2149 residues: MRVTSRVYLFGDQTGEFETGLRQLLQAKNNSLLTSFFERCFYALRQEVSKLPPSQRQIFPRFTSIVDLLARHREFGPNPALESALTCIYHFACFINHYGDGGHAYPSASESHIIGLCTGLLASAAVSSSRTVGELIPAAIETVTVSLRLGLCVLRTRDLIDRSYEKSQSWSMVVSGLNEEEVGALIHGFCQRKSISPSSRPYISAVNTHSLTISAPPTILQEFTNVCLSKENRPVRVPVHAPYHAPHLYDRRDVTSILESWPKGELANYTPRIPVLSSETGEIILARNLHELLGIALEEILLRKLCWDKVQDGYASMLKRTSSAACRIFPIASAASHGLSAALKRTGVPDVEVDNTISESAKTCDNENSTGRTEQSKIAIIGLSGRFPDAPSPEHFWDLLYKGLDVHRVVPPDRWDVKAHVDPTGKIRNTSKVPYGCWIEEPGLFDPRFFNMSPREALQADPAQRLALVTAYEALEQAGFVPDSTPSTQKDRVGIFYGMTSDDYREVNSGQDIDTYFIPGGNRAFTPGRINYHFKFSGPSVSVDTACSSSLAAIHLACNSLWRNDCDTAIAGGTNVLTNPDNFAGLDRGHFLSAKGNCNTFDDEADGYCRADAVGTVVLKRLEDAQADKDPILGVILGAYTNHSAEAVSMTRPHVGAQAFIFNKLLNEANVSPRDVGYIEMHGTGTQAGDAVEMKSVLDIFAPDYTRGPSQSLYLGSAKANIGHAESASGVSSLIKVLLMLKANTIPPHCGIKTKINHNFPTDFKERNVHIAFKPTSWERPQDGKRRLFVNNFSAAGGNTALLIEDAPLSTVSGAPDSRSTHIVAVSARSQSSLRNNIRSLMKYVSELDGQIGGENFLGKLSYTTTARRIHHQFRTMVSGSSLKGIQEALSSAASRDSFTPIPASTPSIGFVFTGQGAQYTGMGQQLYSSCSQFRDNIDRFDSIARSQGFPSIVPLIDGSVPVEEMSPVVTQLGTTCLQMAMTRYWMSLGVKPAFVLGHSLGNYAALNAAGVLTTSDTIYLSGRRAQLLQEKCQVGTHSMLAIKANLAQIKPFLDDDAYEVACINAPGETVISGLSANIDVLSEKLTAEGLKSTKLRVPYAFHSAQVEPILESLGEVAQGVTFHKPSIPVVSALLGEVINEDNWDALGPRYLQRHCRETVNLLAALEATRHAKLMNEKTIWIEVGSHPICSGMIKGTLGPQANTVASLRRNEDTWKVLCNSLSAIYLAGVDIQWKEYHGDFTSSHQVLQLPAYSWDNKNYYIPYNNNFCLTKGDPTVAKIEAAPTSQFHTTSVQRIVETRDEGSKAVVVMESDLSDPLLNPVIQGHKVNGAALCPSSLYADIAQTLGEYLIENYNPALRGSGLDVCDMTVPKPLIAKNSGPQLFRAMATADWEERKANIQIYSVKSDGKKIMDHASCLVKFSDTHLWEADWKRHSYLIKRSIERLQKSVEEGQSHRMHRGMFYKLFSALVDYGDNYKSVEEVVLDSEEYEATARVKFQAKSGNFHRNPFWIDSIGHLTGFVMNANDATDSQSQVYVNHGWDFMRCLKKFSPDTTYRTYVKMQPWQGTIYAGDVYAFDGDEIVAVYGGVKFQGVPRQVLNTVLPPAGGSKAAPRTTARAVPPPPINVEKPKSSVEAKAVSKAVPGDPVKSAGPSVLVQALKILAEEIGVSEAELSDDLVFADYGVDSLLSLTITGKFREELNMDLESSTFIDHPTVKDLKQLLSQASPSDSSDSSEESHYSFRDSSSTEPSTPGTPAFFSPKRGSVVTNVGESETIKTIRLTLSEEIGVSPDEITGDANLAEMGMDSLLSLTVLGRLRETLDIELPSDFFIENPTMDAVETALDLKPKAEPIPSELPVPIQTAAGDEINGVIKANSTHPPATSILLQGNPKKATKTLFLFPDGSGSATSYATLPAVSSDVCVYGLNCPYMKNPENLKCGLDELTMPYVAEIRRRQPKGPYSFGGWSAGGICAYDAARYLILEEGEKVERLLLLDSPFPIGLEKLPPRLYSFFNTIGLFGEGKTPPPKWLLPHFLAFIDSLDAYNAVPFPFSDPELGENMPKTYLIWAKDGVCGKPGDPRPDPPTDGSKDPREMLWLLNDRTDMGPNGWDTLVGPNNVAAIEAIEGADHFTMMKGDKAAKLSAFIGRAMAS.

The N-terminal acylcarrier protein transacylase domain (SAT) stretch occupies residues 8-244 (YLFGDQTGEF…VRVPVHAPYH (237 aa)). Residues 375–806 (QSKIAIIGLS…GGNTALLIED (432 aa)) form the Ketosynthase family 3 (KS3) domain. Catalysis depends on for beta-ketoacyl synthase activity residues Cys547, His682, and His724. A malonyl-CoA:ACP transacylase (MAT) domain region spans residues 911–1231 (FVFTGQGAQY…LSAIYLAGVD (321 aa)). Catalysis depends on Ser1000, which acts as the For acyl/malonyl transferase activity. The tract at residues 1290–1604 (TTSVQRIVET…RQVLNTVLPP (315 aa)) is product template (PT) domain. The segment at 1294–1426 (QRIVETRDEG…CLVKFSDTHL (133 aa)) is N-terminal hotdog fold. The region spanning 1294–1599 (QRIVETRDEG…FQGVPRQVLN (306 aa)) is the PKS/mFAS DH domain. The Proton acceptor; for dehydratase activity role is filled by His1326. Positions 1454-1599 (SHRMHRGMFY…FQGVPRQVLN (146 aa)) are C-terminal hotdog fold. Asp1512 functions as the Proton donor; for dehydratase activity in the catalytic mechanism. Residues 1604–1631 (PAGGSKAAPRTTARAVPPPPINVEKPKS) are disordered. The region spanning 1649-1726 (SAGPSVLVQA…DLKQLLSQAS (78 aa)) is the Carrier 1 domain. Ser1686 is subject to O-(pantetheine 4'-phosphoryl)serine. 2 stretches are compositionally biased toward low complexity: residues 1722–1731 (LSQASPSDSS) and 1744–1755 (SSSTEPSTPGTP). Residues 1722–1763 (LSQASPSDSSDSSEESHYSFRDSSSTEPSTPGTPAFFSPKRG) are disordered. In terms of domain architecture, Carrier 2 spans 1769 to 1846 (VGESETIKTI…AVETALDLKP (78 aa)). Ser1806 bears the O-(pantetheine 4'-phosphoryl)serine mark. Residues 1875–2147 (STHPPATSIL…KLSAFIGRAM (273 aa)) form a thioesterase (TE) domain region. Ser1965 serves as the catalytic For thioesterase activity.

The enzyme catalyses 6 malonyl-CoA + acetyl-CoA + 6 H(+) = naphtopyrone YWA1 + 6 CO2 + 7 CoA + H2O. Its pathway is secondary metabolite biosynthesis. It participates in pigment biosynthesis. Its function is as follows. Non-reducing polyketide synthase; part of the gene cluster 24 that mediates the biosynthesis of a pigment with an aromatic structure protecting the pigmented fungus from both ionizing and non-ionizing radiations based on a mechanism similar to melanin, that is, free radical quenching and spherical spatial arrangement. Catalyzes the biosynthesis of the gamma-naphthopyrone precursor YWA1, via condensation of one acetyl-CoA starter unit with 6 malonyl-CoA units. YWA1 is probably further processed by the additional enzymes present within the cluster 24, however these additional steps have not been characterized yet. YWA1 is not converted to DHN-melanin in Byssochlamys spectabilis since the use of the DHN-melanin pathway inhibitor pyroquilon does not result in a loss of pigmentation. The sequence is that of Non-reducing polyketide synthase PvBS090_009107 from Byssochlamys spectabilis (Paecilomyces variotii).